The following is a 254-amino-acid chain: Thiazole synthase (254 aa).

The active-site Schiff-base intermediate with DXP is Lys95. 1-deoxy-D-xylulose 5-phosphate-binding positions include Gly156, 182 to 183 (AG), and 204 to 205 (NT).

The protein belongs to the ThiG family. In terms of assembly, homotetramer. Forms heterodimers with either ThiH or ThiS.

It localises to the cytoplasm. The enzyme catalyses [ThiS sulfur-carrier protein]-C-terminal-Gly-aminoethanethioate + 2-iminoacetate + 1-deoxy-D-xylulose 5-phosphate = [ThiS sulfur-carrier protein]-C-terminal Gly-Gly + 2-[(2R,5Z)-2-carboxy-4-methylthiazol-5(2H)-ylidene]ethyl phosphate + 2 H2O + H(+). The protein operates within cofactor biosynthesis; thiamine diphosphate biosynthesis. Catalyzes the rearrangement of 1-deoxy-D-xylulose 5-phosphate (DXP) to produce the thiazole phosphate moiety of thiamine. Sulfur is provided by the thiocarboxylate moiety of the carrier protein ThiS. In vitro, sulfur can be provided by H(2)S. This chain is Thiazole synthase, found in Shewanella piezotolerans (strain WP3 / JCM 13877).